Consider the following 100-residue polypeptide: Small ribosomal subunit protein bS20 (100 aa).

The disordered stretch occupies residues 79–100 (AAHQKSRLSAAVKQAIEPAPST).

Belongs to the bacterial ribosomal protein bS20 family.

Binds directly to 16S ribosomal RNA. This Prochlorococcus marinus (strain MIT 9303) protein is Small ribosomal subunit protein bS20.